The chain runs to 96 residues: Co-chaperonin GroES (96 aa).

It belongs to the GroES chaperonin family. In terms of assembly, heptamer of 7 subunits arranged in a ring. Interacts with the chaperonin GroEL.

The protein resides in the cytoplasm. Functionally, together with the chaperonin GroEL, plays an essential role in assisting protein folding. The GroEL-GroES system forms a nano-cage that allows encapsulation of the non-native substrate proteins and provides a physical environment optimized to promote and accelerate protein folding. GroES binds to the apical surface of the GroEL ring, thereby capping the opening of the GroEL channel. This is Co-chaperonin GroES from Polaromonas naphthalenivorans (strain CJ2).